Reading from the N-terminus, the 257-residue chain is Imidazole glycerol phosphate synthase subunit HisF (257 aa).

Catalysis depends on residues D12 and D131.

This sequence belongs to the HisA/HisF family. Heterodimer of HisH and HisF.

The protein resides in the cytoplasm. It catalyses the reaction 5-[(5-phospho-1-deoxy-D-ribulos-1-ylimino)methylamino]-1-(5-phospho-beta-D-ribosyl)imidazole-4-carboxamide + L-glutamine = D-erythro-1-(imidazol-4-yl)glycerol 3-phosphate + 5-amino-1-(5-phospho-beta-D-ribosyl)imidazole-4-carboxamide + L-glutamate + H(+). It participates in amino-acid biosynthesis; L-histidine biosynthesis; L-histidine from 5-phospho-alpha-D-ribose 1-diphosphate: step 5/9. Its function is as follows. IGPS catalyzes the conversion of PRFAR and glutamine to IGP, AICAR and glutamate. The HisF subunit catalyzes the cyclization activity that produces IGP and AICAR from PRFAR using the ammonia provided by the HisH subunit. In Kineococcus radiotolerans (strain ATCC BAA-149 / DSM 14245 / SRS30216), this protein is Imidazole glycerol phosphate synthase subunit HisF.